The following is a 436-amino-acid chain: Protein sof1 (436 aa).

WD repeat units follow at residues 62-102, 105-143, 145-175, 176-225, 227-267, 271-310, and 314-353; these read GHQD…ERWT, AHEG…VKRS, LGDS…WDYS, RDTP…PLTK, ITKL…RALH, DHVS…SRDV, and KRMQ…RASI. The disordered stretch occupies residues 411 to 436; the sequence is NIRRHSKKGAVPYEKERERHVVGIQK. Basic and acidic residues predominate over residues 423 to 436; the sequence is YEKERERHVVGIQK.

The protein belongs to the WD repeat DCAF13/WDSOF1 family. In terms of assembly, interacts with snoRNA U3. Component of the ribosomal small subunit (SSU) processome composed of at least 40 protein subunits and snoRNA U3.

The protein localises to the nucleus. The protein resides in the nucleolus. Its subcellular location is the cytoplasm. It localises to the cytoskeleton. It is found in the spindle. Its function is as follows. Required for ribosomal RNA processing. This Schizosaccharomyces pombe (strain 972 / ATCC 24843) (Fission yeast) protein is Protein sof1 (sof1).